A 708-amino-acid polypeptide reads, in one-letter code: Matrix metalloproteinase-9 (708 aa).

A signal peptide spans 1-19; it reads MSPWQPLLLVLLALGYSFA. A propeptide spans 20 to 107 (activation peptide); the sequence is APHQRQPTYV…PRCGVPDVGK (88 aa). Residue N39 is glycosylated (N-linked (GlcNAc...) asparagine). Positions 98-105 match the Cysteine switch motif; that stretch reads PRCGVPDV. A Zn(2+)-binding site is contributed by C100. A glycan (N-linked (GlcNAc...) asparagine) is linked at N121. 2 residues coordinate Ca(2+): D132 and D166. Zn(2+) is bound by residues H176 and D178. Ca(2+)-binding residues include D183, G184, D186, and L188. H191 serves as a coordination point for Zn(2+). Residues G198, Q200, and D202 each coordinate Ca(2+). Residue H204 participates in Zn(2+) binding. D206, D207, and E209 together coordinate Ca(2+). 3 Fibronectin type-II domains span residues 226-274, 284-332, and 343-391; these read ANGA…FCPS, GDGK…FCPT, and SAGE…FCPD. Disulfide bonds link C231/C257, C245/C272, C289/C315, C303/C330, C348/C374, and C362/C389. H402 contacts Zn(2+). E403 is a catalytic residue. 2 residues coordinate Zn(2+): H406 and H412. A disordered region spans residues 441-520; it reads HHLYGRGSKP…SSTPDDNPCN (80 aa). Residues 480–490 are compositionally biased toward low complexity; it reads PTGGPTVAPTG. Positions 491 to 502 are enriched in pro residues; the sequence is APSPGPTGPPTA. A disulfide bridge links C519 with C707. Hemopexin repeat units follow at residues 521–566, 567–611, 613–660, and 661–707; these read VDVF…WPAF, PSKL…GLGS, VTLV…FSGV, and PWNS…LLQC.

This sequence belongs to the peptidase M10A family. Exists as monomer or homodimer; disulfide-linked. Also exists as heterodimer with LCN2. Macrophages and transformed cell lines produce only the monomeric form. Interacts with ECM1. The cofactor is Zn(2+). Ca(2+) serves as cofactor. N- and O-glycosylated.

Its subcellular location is the secreted. It localises to the extracellular space. It is found in the extracellular matrix. The catalysed reaction is Cleavage of gelatin types I and V and collagen types IV and V.. Functionally, matrix metalloproteinase that plays an essential role in local proteolysis of the extracellular matrix and in leukocyte migration. Could play a role in bone osteoclastic resorption. Cleaves KiSS1 at a Gly-|-Leu bond. Cleaves NINJ1 to generate the Secreted ninjurin-1 form. Cleaves type IV and type V collagen into large C-terminal three quarter fragments and shorter N-terminal one quarter fragments. Degrades fibronectin but not laminin or Pz-peptide. This Rattus norvegicus (Rat) protein is Matrix metalloproteinase-9 (Mmp9).